A 248-amino-acid chain; its full sequence is uncharacterized protein (248 aa).

8-32 (IVTGAAQGIGQAYAQALAREGASVV) is a binding site for NADP(+). Serine 143 is a binding site for substrate. Residue tyrosine 153 is the Proton acceptor of the active site.

The protein belongs to the short-chain dehydrogenases/reductases (SDR) family.

This is an uncharacterized protein from Mycobacterium tuberculosis (strain CDC 1551 / Oshkosh).